The primary structure comprises 303 residues: Protoheme IX farnesyltransferase 1 (303 aa).

9 consecutive transmembrane segments (helical) span residues 18–38 (PGII…AAQG), 42–62 (LTLM…GCAV), 91–111 (AVLS…AIFT), 114–134 (LAVL…SLYM), 139–159 (VYGT…GYCA), 169–189 (VILL…IAIF), 213–233 (LHIV…PLAG), 235–255 (TGIA…AMAL), and 274–294 (FSII…QVVA).

It belongs to the UbiA prenyltransferase family. Protoheme IX farnesyltransferase subfamily.

It localises to the cell inner membrane. The enzyme catalyses heme b + (2E,6E)-farnesyl diphosphate + H2O = Fe(II)-heme o + diphosphate. It participates in porphyrin-containing compound metabolism; heme O biosynthesis; heme O from protoheme: step 1/1. Its function is as follows. Converts heme B (protoheme IX) to heme O by substitution of the vinyl group on carbon 2 of heme B porphyrin ring with a hydroxyethyl farnesyl side group. This Shewanella frigidimarina (strain NCIMB 400) protein is Protoheme IX farnesyltransferase 1.